The chain runs to 465 residues: MPYFMRLALFLFCLMALVESRKPRRKRWTGHLETSKPSHLYKKNLDVTKIRTGKPRPLLRVEDHDFTMRPAFGGPAIPVGVDVQVESLDSISEVDMDFTMTLYLRHYWRDERLAFPSSSNRSMTFDGRLVKKIWVPDVFFVHSKRSFTHDTTTDNIMLRVFPDGHVLYSMRITVTAMCNMDFSHFPLDSQTCSLELESYAYTDEDLMLYWKNGDESLKTDEKISLSQFLIQKFHTTSRLAFYSSTGWYNRLYINFTLRRHIFFFLLQTYFPATLMVMLSWVSFWIDHRAVPARVSLGIMTVLTMSTIITGVNASMPRVSYIRAVDIYLWVSFVFVFLSVLEYAAVNYLTTVQEQKERKLRDKFPCTCGMLHSRTMTLDGSYSESEANSLAGYPRSHILPEEERQDKIVVHLALNSELTSSRKKGLLKGQMGLYIFQNTHAIDKYSRLIFPAFYIVFNLIYWSVFS.

Residues 1-20 form the signal peptide; that stretch reads MPYFMRLALFLFCLMALVES. Over 21 to 260 the chain is Extracellular; sequence RKPRRKRWTG…LYINFTLRRH (240 aa). A 4-aminobutanoate-binding site is contributed by R105. N120 carries an N-linked (GlcNAc...) asparagine glycan. A 4-aminobutanoate-binding site is contributed by S169. The cysteines at positions 178 and 192 are disulfide-linked. E197 is a binding site for 4-aminobutanoate. Residue N254 is glycosylated (N-linked (GlcNAc...) asparagine). The chain crosses the membrane as a helical span at residues 261-281; it reads IFFFLLQTYFPATLMVMLSWV. Residues 282–293 are Cytoplasmic-facing; the sequence is SFWIDHRAVPAR. Residues 294–314 traverse the membrane as a helical segment; it reads VSLGIMTVLTMSTIITGVNAS. Over 315–325 the chain is Extracellular; sequence MPRVSYIRAVD. Residues 326-346 form a helical membrane-spanning segment; that stretch reads IYLWVSFVFVFLSVLEYAAVN. Residues 347-443 are Cytoplasmic-facing; sequence YLTTVQEQKE…IFQNTHAIDK (97 aa). A helical membrane pass occupies residues 444–464; that stretch reads YSRLIFPAFYIVFNLIYWSVF. Position 465 (S465) is a topological domain, extracellular.

It belongs to the ligand-gated ion channel (TC 1.A.9) family. Gamma-aminobutyric acid receptor (TC 1.A.9.5) subfamily. GABRR2 sub-subfamily. Three rho subunits (rho-1/GBRR1, rho-2/GBRR2 and rho-3/GBRR3) coassemble either to form functional homopentamers or heteropentamers. Rho-2 is unable to form a functional homopentamer. Interacts with SQSTM1. As to expression, expressed in spinal cord and in cerebellum. Expressed in retina.

Its subcellular location is the postsynaptic cell membrane. The protein resides in the cell membrane. The catalysed reaction is chloride(in) = chloride(out). With respect to regulation, in contrast with rho-1 and rho-3 homopentamers, rho-2 GABAARs are not inhibited by picrotoxin. In terms of biological role, rho subunit of the pentameric ligand-gated chloride channels responsible for mediating the effects of gamma-aminobutyric acid (GABA), the major inhibitory neurotransmitter in the brain. Rho-containing GABA-gated chloride channels are a subclass of GABA(A) receptors (GABAARs) entirely composed of rho subunits, where GABA molecules bind at the rho intersubunit interfaces. When activated by GABA, rho-GABAARs selectively allow the flow of chloride anions across the cell membrane down their electrochemical gradient. Rho-2 GABAARs may contribute to the regulation of glial development in the cerebellum by controlling extrasynaptic transmission. Rho-2 GABAARs are also involved in neuronal tonic (extrasynaptic) and phasic (synaptic) transmission in the Purkinje neurons of the cerebellum. Rho-2 GABAARs expressed in retina may play a role in retinal neurotransmission. The sequence is that of Gamma-aminobutyric acid receptor subunit rho-2 from Rattus norvegicus (Rat).